The primary structure comprises 118 residues: Large ribosomal subunit protein bL20 (118 aa).

Belongs to the bacterial ribosomal protein bL20 family.

Its function is as follows. Binds directly to 23S ribosomal RNA and is necessary for the in vitro assembly process of the 50S ribosomal subunit. It is not involved in the protein synthesizing functions of that subunit. The protein is Large ribosomal subunit protein bL20 of Agathobacter rectalis (strain ATCC 33656 / DSM 3377 / JCM 17463 / KCTC 5835 / VPI 0990) (Eubacterium rectale).